The sequence spans 116 residues: Tachykinin-3 (116 aa).

The N-terminal stretch at 1–20 (MRSAMLFAAVLALSLAWTFG) is a signal peptide. Residues 21-79 (AACEEPQEQGGRLSKDSDLSLLPPPLLRRLYDSRSISLEGLLKVLSKASVGPKETSLPQ) constitute a propeptide that is removed on maturation. A Methionine amide modification is found at Met-91. Positions 92-116 (GKRNSQPDTPADVVEENTPSFGVLK) are disordered. Positions 95–116 (NSQPDTPADVVEENTPSFGVLK) are excised as a propeptide.

This sequence belongs to the tachykinin family.

The protein localises to the secreted. Functionally, tachykinins are active peptides which excite neurons, evoke behavioral responses, are potent vasodilators and secretagogues, and contract (directly or indirectly) many smooth muscles. Is a critical central regulator of gonadal function. The chain is Tachykinin-3 (Tac3) from Rattus norvegicus (Rat).